We begin with the raw amino-acid sequence, 566 residues long: Proline--tRNA ligase (566 aa).

The protein belongs to the class-II aminoacyl-tRNA synthetase family. ProS type 1 subfamily. Homodimer.

The protein localises to the cytoplasm. The enzyme catalyses tRNA(Pro) + L-proline + ATP = L-prolyl-tRNA(Pro) + AMP + diphosphate. In terms of biological role, catalyzes the attachment of proline to tRNA(Pro) in a two-step reaction: proline is first activated by ATP to form Pro-AMP and then transferred to the acceptor end of tRNA(Pro). As ProRS can inadvertently accommodate and process non-cognate amino acids such as alanine and cysteine, to avoid such errors it has two additional distinct editing activities against alanine. One activity is designated as 'pretransfer' editing and involves the tRNA(Pro)-independent hydrolysis of activated Ala-AMP. The other activity is designated 'posttransfer' editing and involves deacylation of mischarged Ala-tRNA(Pro). The misacylated Cys-tRNA(Pro) is not edited by ProRS. This is Proline--tRNA ligase from Bacillus cereus (strain B4264).